A 662-amino-acid chain; its full sequence is UPF0313 protein CPE1196 (662 aa).

Residues 296–567 enclose the Radical SAM core domain; it reads AIEEVKFSLV…AMQRALLQFK (272 aa). [4Fe-4S] cluster is bound by residues cysteine 310, cysteine 314, and cysteine 317. The interval 597 to 662 is disordered; that stretch reads RDKNSFGKGN…QRGSKGKKRR (66 aa). Basic and acidic residues predominate over residues 618 to 632; it reads NRNENSGRRESEDKK. The span at 633–644 shows a compositional bias: basic residues; that stretch reads RSSHSKKQRGNK.

This sequence belongs to the UPF0313 family. Requires [4Fe-4S] cluster as cofactor.

This Clostridium perfringens (strain 13 / Type A) protein is UPF0313 protein CPE1196.